A 379-amino-acid chain; its full sequence is Glutamate 5-kinase (379 aa).

K20 provides a ligand contact to ATP. Substrate contacts are provided by S59, D146, and N158. 220–226 (SGGMYSK) is a binding site for ATP. Residues 285-362 (TGSVVVDDGA…AELTAILGDN (78 aa)) form the PUA domain.

The protein belongs to the glutamate 5-kinase family.

Its subcellular location is the cytoplasm. The catalysed reaction is L-glutamate + ATP = L-glutamyl 5-phosphate + ADP. Its pathway is amino-acid biosynthesis; L-proline biosynthesis; L-glutamate 5-semialdehyde from L-glutamate: step 1/2. Functionally, catalyzes the transfer of a phosphate group to glutamate to form L-glutamate 5-phosphate. This chain is Glutamate 5-kinase, found in Oleidesulfovibrio alaskensis (strain ATCC BAA-1058 / DSM 17464 / G20) (Desulfovibrio alaskensis).